The sequence spans 575 residues: Estrogen receptor beta (575 aa).

The segment at 1 to 160 is modulating; sequence MSSSLSPTLQ…GAVVKRDMHF (160 aa). The tract at residues 108–151 is disordered; it reads DTKPHTSGRHSSFLSRPKLFGKRPEDGDGDEALDDDDPSSSSSG. Acidic residues predominate over residues 134-145; sequence GDGDEALDDDDP. 2 consecutive NR C4-type zinc fingers follow at residues 161 to 181 and 197 to 221; these read CVVCHDYASGYHYGVWSCEGC and CPATNQCTIDKNRRKSCQACRLRKC. The segment at residues 161–226 is a DNA-binding region (nuclear receptor); it reads CVVCHDYASG…RLRKCYEMGM (66 aa). The NR LBD domain maps to 290–526; it reads SPEQLVYCIL…DLLLEMLDAN (237 aa). The span at 537-549 shows a compositional bias: polar residues; the sequence is VCTDPVTPATSPN. A disordered region spans residues 537–557; sequence VCTDPVTPATSPNTPLPPQLH.

This sequence belongs to the nuclear hormone receptor family. NR3 subfamily. As to quaternary structure, binds DNA as a homodimer. Can form a heterodimer with ER-alpha. Ovary and testis.

The protein resides in the nucleus. Its function is as follows. Binds estrogens with an affinity similar to that of ER-alpha, and activates expression of reporter genes containing estrogen response elements (ERE) in an estrogen-dependent manner. In Ictalurus punctatus (Channel catfish), this protein is Estrogen receptor beta (esr2).